A 413-amino-acid polypeptide reads, in one-letter code: Putative tRNA pseudouridine synthase C16C4.06c (413 aa).

Aspartate 96 (nucleophile) is an active-site residue. Tyrosine 154 is a substrate binding site.

This sequence belongs to the tRNA pseudouridine synthase TruA family.

The protein localises to the cytoplasm. The protein resides in the nucleus. It carries out the reaction a uridine in tRNA = a pseudouridine in tRNA. This chain is Putative tRNA pseudouridine synthase C16C4.06c, found in Schizosaccharomyces pombe (strain 972 / ATCC 24843) (Fission yeast).